A 399-amino-acid chain; its full sequence is Probable tRNA sulfurtransferase (399 aa).

Residues 60–165 (YAVMERLKRV…TEGTYISCET (106 aa)) enclose the THUMP domain. Residues 183 to 184 (LL), 208 to 209 (HF), arginine 265, glycine 287, and glutamine 296 contribute to the ATP site.

Belongs to the ThiI family.

The protein localises to the cytoplasm. It carries out the reaction [ThiI sulfur-carrier protein]-S-sulfanyl-L-cysteine + a uridine in tRNA + 2 reduced [2Fe-2S]-[ferredoxin] + ATP + H(+) = [ThiI sulfur-carrier protein]-L-cysteine + a 4-thiouridine in tRNA + 2 oxidized [2Fe-2S]-[ferredoxin] + AMP + diphosphate. The enzyme catalyses [ThiS sulfur-carrier protein]-C-terminal Gly-Gly-AMP + S-sulfanyl-L-cysteinyl-[cysteine desulfurase] + AH2 = [ThiS sulfur-carrier protein]-C-terminal-Gly-aminoethanethioate + L-cysteinyl-[cysteine desulfurase] + A + AMP + 2 H(+). Its pathway is cofactor biosynthesis; thiamine diphosphate biosynthesis. Catalyzes the ATP-dependent transfer of a sulfur to tRNA to produce 4-thiouridine in position 8 of tRNAs, which functions as a near-UV photosensor. Also catalyzes the transfer of sulfur to the sulfur carrier protein ThiS, forming ThiS-thiocarboxylate. This is a step in the synthesis of thiazole, in the thiamine biosynthesis pathway. The sulfur is donated as persulfide by IscS. The polypeptide is Probable tRNA sulfurtransferase (Brevibacillus brevis (strain 47 / JCM 6285 / NBRC 100599)).